The following is a 305-amino-acid chain: Tyrosine recombinase XerC (305 aa).

A Core-binding (CB) domain is found at 1-93; it reads MVLDGFAAYF…AWRQYCAWLV (93 aa). A Tyr recombinase domain is found at 114 to 294; the sequence is RVPKALPQEW…DFDHIARLYD (181 aa). Active-site residues include Arg155, Lys179, His246, Arg249, and His272. The active-site O-(3'-phospho-DNA)-tyrosine intermediate is Tyr281.

It belongs to the 'phage' integrase family. XerC subfamily. Forms a cyclic heterotetrameric complex composed of two molecules of XerC and two molecules of XerD.

Its subcellular location is the cytoplasm. In terms of biological role, site-specific tyrosine recombinase, which acts by catalyzing the cutting and rejoining of the recombining DNA molecules. The XerC-XerD complex is essential to convert dimers of the bacterial chromosome into monomers to permit their segregation at cell division. It also contributes to the segregational stability of plasmids. The sequence is that of Tyrosine recombinase XerC from Neisseria gonorrhoeae (strain ATCC 700825 / FA 1090).